The chain runs to 251 residues: Large ribosomal subunit protein uL16m (251 aa).

The transit peptide at 1-29 (MWRLLTRAPAPLWRMHFSDTWAALPTSAG) directs the protein to the mitochondrion.

Belongs to the universal ribosomal protein uL16 family. As to quaternary structure, component of the mitochondrial ribosome large subunit (39S) which comprises a 16S rRNA and about 50 distinct proteins.

It localises to the mitochondrion. The protein is Large ribosomal subunit protein uL16m (Mrpl16) of Rattus norvegicus (Rat).